The sequence spans 581 residues: A-type ATP synthase subunit A (581 aa).

234–241 is a binding site for ATP; the sequence is GPFGSGKT.

It belongs to the ATPase alpha/beta chains family. Has multiple subunits with at least A(3), B(3), C, D, E, F, H, I and proteolipid K(x).

The protein resides in the cell membrane. It catalyses the reaction ATP + H2O + 4 H(+)(in) = ADP + phosphate + 5 H(+)(out). Component of the A-type ATP synthase that produces ATP from ADP in the presence of a proton gradient across the membrane. The A chain is the catalytic subunit. The chain is A-type ATP synthase subunit A from Archaeoglobus fulgidus (strain ATCC 49558 / DSM 4304 / JCM 9628 / NBRC 100126 / VC-16).